A 236-amino-acid chain; its full sequence is Phosphoribosylaminoimidazole-succinocarboxamide synthase (236 aa).

It belongs to the SAICAR synthetase family.

It catalyses the reaction 5-amino-1-(5-phospho-D-ribosyl)imidazole-4-carboxylate + L-aspartate + ATP = (2S)-2-[5-amino-1-(5-phospho-beta-D-ribosyl)imidazole-4-carboxamido]succinate + ADP + phosphate + 2 H(+). It participates in purine metabolism; IMP biosynthesis via de novo pathway; 5-amino-1-(5-phospho-D-ribosyl)imidazole-4-carboxamide from 5-amino-1-(5-phospho-D-ribosyl)imidazole-4-carboxylate: step 1/2. The chain is Phosphoribosylaminoimidazole-succinocarboxamide synthase (purC) from Lactococcus lactis subsp. lactis (strain IL1403) (Streptococcus lactis).